A 177-amino-acid chain; its full sequence is Inorganic pyrophosphatase (177 aa).

3 residues coordinate substrate: Lys34, Arg48, and Tyr60. Positions 70, 75, and 107 each coordinate Mg(2+). Tyr144 serves as a coordination point for substrate.

The protein belongs to the PPase family. As to quaternary structure, homohexamer. Requires Mg(2+) as cofactor.

The protein localises to the cytoplasm. It carries out the reaction diphosphate + H2O = 2 phosphate + H(+). In terms of biological role, catalyzes the hydrolysis of inorganic pyrophosphate (PPi) forming two phosphate ions. The chain is Inorganic pyrophosphatase from Picrophilus torridus (strain ATCC 700027 / DSM 9790 / JCM 10055 / NBRC 100828 / KAW 2/3).